The primary structure comprises 331 residues: Terpene synthase 8 (331 aa).

A DDxx(x)D/E motif motif is present at residues 97-102 (DDFYLE). The NDxxSxxxD/E motif motif lies at 228–236 (NDIYSFNKE).

Belongs to the terpene synthase family.

In terms of biological role, terpene synthase that converts its substrate farnesyl diphosphate (FPP) into several yet unidentified sesquiterpenes. The protein is Terpene synthase 8 of Dictyostelium purpureum (Slime mold).